Reading from the N-terminus, the 685-residue chain is Protein hook (685 aa).

The Calponin-homology (CH) domain maps to M6–A122. The stretch at Q134–K570 forms a coiled coil. 3 disordered regions span residues A430 to V449, L593 to V625, and P661 to K685. Positions A602–G623 are enriched in low complexity. Residues P661–R670 are compositionally biased toward polar residues.

This sequence belongs to the hook family. As to quaternary structure, homodimer. Interacts with microtubules via its N-terminus.

The protein resides in the cytoplasm. The protein localises to the cytoskeleton. It is found in the endosome. Its function is as follows. Involved in endocytic trafficking. Probably acts as a cytoskeletal linker protein that tethers endosome vesicles to the cytoskeleton. This Aedes aegypti (Yellowfever mosquito) protein is Protein hook.